Here is a 239-residue protein sequence, read N- to C-terminus: Proteasome subunit beta type-6 (239 aa).

Position 2 is an N-acetylalanine (Ala-2). A propeptide spans 2-34 (AATLLAARGAGPAPAWGPEAFTPDWESREVSTG) (removed in mature form). Thr-35 functions as the Nucleophile in the catalytic mechanism. At Thr-69 the chain carries Phosphothreonine.

It belongs to the peptidase T1B family. The 26S proteasome consists of a 20S proteasome core and two 19S regulatory subunits. The 20S proteasome core is a barrel-shaped complex made of 28 subunits that are arranged in four stacked rings. The two outer rings are each formed by seven alpha subunits, and the two inner rings are formed by seven beta subunits. The proteolytic activity is exerted by three beta-subunits PSMB5, PSMB6 and PSMB7. In terms of assembly, (Microbial infection) Interacts with HIV-1 protein Tat.

The protein localises to the cytoplasm. The protein resides in the nucleus. It carries out the reaction Cleavage of peptide bonds with very broad specificity.. Component of the 20S core proteasome complex involved in the proteolytic degradation of most intracellular proteins. This complex plays numerous essential roles within the cell by associating with different regulatory particles. Associated with two 19S regulatory particles, forms the 26S proteasome and thus participates in the ATP-dependent degradation of ubiquitinated proteins. The 26S proteasome plays a key role in the maintenance of protein homeostasis by removing misfolded or damaged proteins that could impair cellular functions, and by removing proteins whose functions are no longer required. Associated with the PA200 or PA28, the 20S proteasome mediates ubiquitin-independent protein degradation. This type of proteolysis is required in several pathways including spermatogenesis (20S-PA200 complex) or generation of a subset of MHC class I-presented antigenic peptides (20S-PA28 complex). Within the 20S core complex, PSMB6 displays a peptidylglutamyl-hydrolizing activity also termed postacidic or caspase-like activity, meaning that the peptides bond hydrolysis occurs directly after acidic residues. The chain is Proteasome subunit beta type-6 from Homo sapiens (Human).